The primary structure comprises 196 residues: 3-isopropylmalate dehydratase small subunit (196 aa).

The protein belongs to the LeuD family. LeuD type 1 subfamily. In terms of assembly, heterodimer of LeuC and LeuD.

It carries out the reaction (2R,3S)-3-isopropylmalate = (2S)-2-isopropylmalate. It functions in the pathway amino-acid biosynthesis; L-leucine biosynthesis; L-leucine from 3-methyl-2-oxobutanoate: step 2/4. Its function is as follows. Catalyzes the isomerization between 2-isopropylmalate and 3-isopropylmalate, via the formation of 2-isopropylmaleate. This chain is 3-isopropylmalate dehydratase small subunit, found in Corynebacterium diphtheriae (strain ATCC 700971 / NCTC 13129 / Biotype gravis).